A 367-amino-acid chain; its full sequence is Histidinol-phosphate aminotransferase 1 (367 aa).

The residue at position 229 (K229) is an N6-(pyridoxal phosphate)lysine.

It belongs to the class-II pyridoxal-phosphate-dependent aminotransferase family. Histidinol-phosphate aminotransferase subfamily. As to quaternary structure, homodimer. It depends on pyridoxal 5'-phosphate as a cofactor.

The catalysed reaction is L-histidinol phosphate + 2-oxoglutarate = 3-(imidazol-4-yl)-2-oxopropyl phosphate + L-glutamate. Its pathway is amino-acid biosynthesis; L-histidine biosynthesis; L-histidine from 5-phospho-alpha-D-ribose 1-diphosphate: step 7/9. In Idiomarina loihiensis (strain ATCC BAA-735 / DSM 15497 / L2-TR), this protein is Histidinol-phosphate aminotransferase 1.